Consider the following 50-residue polypeptide: Photosystem II reaction center protein M (50 aa).

A helical transmembrane segment spans residues 6–26 (FGFVASLLFVGVPTIFLIGLF).

It belongs to the PsbM family. As to quaternary structure, PSII is composed of 1 copy each of membrane proteins PsbA, PsbB, PsbC, PsbD, PsbE, PsbF, PsbH, PsbI, PsbJ, PsbK, PsbL, PsbM, PsbT, PsbX, PsbY, Psb30/Ycf12, peripheral proteins PsbO, CyanoQ (PsbQ), PsbU, PsbV and a large number of cofactors. It forms dimeric complexes.

It localises to the cellular thylakoid membrane. Functionally, one of the components of the core complex of photosystem II (PSII). PSII is a light-driven water:plastoquinone oxidoreductase that uses light energy to abstract electrons from H(2)O, generating O(2) and a proton gradient subsequently used for ATP formation. It consists of a core antenna complex that captures photons, and an electron transfer chain that converts photonic excitation into a charge separation. This subunit is found at the monomer-monomer interface. The chain is Photosystem II reaction center protein M from Prochlorococcus marinus (strain MIT 9215).